The chain runs to 365 residues: TD and POZ domain-containing protein 1 (365 aa).

The MATH domain occupies 19 to 149; that stretch reads KFCYKWTISN…EDQLTICCKV (131 aa). The BTB domain maps to 188–250; sequence TDCCLLVAGH…EMMGFIYTGK (63 aa).

Belongs to the Tdpoz family.

The sequence is that of TD and POZ domain-containing protein 1 from Mus musculus (Mouse).